Consider the following 197-residue polypeptide: Inosine triphosphate pyrophosphatase (197 aa).

Residue 10–15 (TGNANK) participates in ITP binding. Glutamate 45 lines the Mg(2+) pocket. Residues lysine 58, 76-77 (DT), lysine 93, 151-154 (FGWD), lysine 175, and 180-181 (HR) each bind ITP.

The protein belongs to the HAM1 NTPase family. As to quaternary structure, homodimer. The cofactor is Mg(2+). It depends on Mn(2+) as a cofactor.

It is found in the cytoplasm. The protein localises to the nucleus. It catalyses the reaction ITP + H2O = IMP + diphosphate + H(+). It carries out the reaction dITP + H2O = dIMP + diphosphate + H(+). The catalysed reaction is XTP + H2O = XMP + diphosphate + H(+). The enzyme catalyses N(6)-hydroxy-dATP + H2O = N(6)-hydroxy-dAMP + diphosphate + H(+). Its function is as follows. Pyrophosphatase that hydrolyzes the non-canonical purine nucleotides inosine triphosphate (ITP), deoxyinosine triphosphate (dITP) as well as 2'-deoxy-N-6-hydroxylaminopurine triphosphate (dHAPTP) and 5-bromodeoxyuridine 5'-triphosphate (BrdUTP) to their respective monophosphate derivatives. Xanthosine 5'-triphosphate (XTP) is also a potential substrate. The enzyme does not distinguish between the deoxy- and ribose forms. Probably excludes non-canonical purines from RNA and DNA precursor pools, thus preventing their incorporation into RNA and DNA and avoiding chromosomal lesions. The chain is Inosine triphosphate pyrophosphatase from Saccharomyces cerevisiae (strain ATCC 204508 / S288c) (Baker's yeast).